Here is a 425-residue protein sequence, read N- to C-terminus: Ribosome biogenesis protein WDR12 homolog (425 aa).

Residues 7 to 93 form a ubiquitin-like (UBL) domain region; that stretch reads IQAKFFTKDE…ETIVHLEYLE (87 aa). 7 WD repeats span residues 105-142, 145-187, 194-233, 265-303, 305-344, 350-390, and 394-425; these read IHDD…RRLT, GHLG…NAVE, GHAR…TDTD, GHHE…MKSQ, AGSK…GTIV, SHAG…APLY, and GHED…FEHK. The tract at residues 227-253 is disordered; the sequence is PDSTDTDHGQDGSEEGSRKKQKTVDGK. Basic and acidic residues predominate over residues 231–253; it reads DTDHGQDGSEEGSRKKQKTVDGK.

Belongs to the WD repeat WDR12/YTM1 family.

Its subcellular location is the nucleus. The protein localises to the nucleolus. It is found in the nucleoplasm. Its function is as follows. Required for maturation of ribosomal RNAs and formation of the large ribosomal subunit. The chain is Ribosome biogenesis protein WDR12 homolog from Ixodes scapularis (Black-legged tick).